The following is a 296-amino-acid chain: Phosphoribosylaminoimidazole-succinocarboxamide synthase (296 aa).

Belongs to the SAICAR synthetase family.

The enzyme catalyses 5-amino-1-(5-phospho-D-ribosyl)imidazole-4-carboxylate + L-aspartate + ATP = (2S)-2-[5-amino-1-(5-phospho-beta-D-ribosyl)imidazole-4-carboxamido]succinate + ADP + phosphate + 2 H(+). It participates in purine metabolism; IMP biosynthesis via de novo pathway; 5-amino-1-(5-phospho-D-ribosyl)imidazole-4-carboxamide from 5-amino-1-(5-phospho-D-ribosyl)imidazole-4-carboxylate: step 1/2. The protein is Phosphoribosylaminoimidazole-succinocarboxamide synthase of Citrifermentans bemidjiense (strain ATCC BAA-1014 / DSM 16622 / JCM 12645 / Bem) (Geobacter bemidjiensis).